The following is a 25-amino-acid chain: Non-specific lipid-transfer protein 3 (25 aa).

In terms of tissue distribution, seeds (at protein level).

Plant non-specific lipid-transfer proteins transfer phospholipids as well as galactolipids across membranes. May play a role in wax or cutin deposition in the cell walls of expanding epidermal cells and certain secretory tissues. Has antibacterial and antifungal activity. Displays antibacterial activity towards both Gram-negative bacteria, P.carotovorum (IC(50)=11.5 uM) and P.syringae (IC(50)=12.0 uM), and Gram-positive bacterium C.michiganensis subsp michiganense (IC(50)=11.2 uM). Also displays antifungal activity towards A.niger VKM F-33 (IC(50)=1.05 uM) and B.cinerea TSKHA (IC(50)=1.88 uM) and relatively moderate activity towards B.sorokiniana VKM F-1448 (IC(50)=1.55 uM). Displays some inhibitory activity towards P.infestans OSV12. The polypeptide is Non-specific lipid-transfer protein 3 (Nigella sativa (Black cumin)).